The primary structure comprises 89 residues: Dynein light chain (89 aa).

This sequence belongs to the dynein light chain family. In terms of tissue distribution, tegument.

It is found in the cytoplasm. The protein resides in the cytoskeleton. Its function is as follows. Acts as a non-catalytic accessory component of a dynein complex. This chain is Dynein light chain (DLC), found in Schistosoma mansoni (Blood fluke).